The following is a 247-amino-acid chain: uncharacterized protein (247 aa).

This is an uncharacterized protein from Saccharomyces cerevisiae (strain ATCC 204508 / S288c) (Baker's yeast).